We begin with the raw amino-acid sequence, 310 residues long: Sporozoite surface protein P36 (310 aa).

The N-terminal stretch at 1-24 is a signal peptide; sequence MRKALYSLLFYMCICLYIYTPVFM. 2 consecutive 6-Cys domains span residues 25–157 and 168–309; these read ANLK…IKKT and YIKG…STKA. 6 disulfides stabilise this stretch: cysteine 38/cysteine 48, cysteine 62/cysteine 137, cysteine 80/cysteine 135, cysteine 172/cysteine 196, cysteine 210/cysteine 291, and cysteine 227/cysteine 289. Asparagine 72, asparagine 114, and asparagine 118 each carry an N-linked (GlcNAc...) asparagine glycan. A glycan (N-linked (GlcNAc...) asparagine) is linked at asparagine 290.

The protein resides in the cell surface. It is found in the cell membrane. Functionally, involved in sporozoite infection of hepatocytes and replication therein. This Plasmodium yoelii yoelii protein is Sporozoite surface protein P36 (P36).